The primary structure comprises 401 residues: Homoserine O-acetyltransferase (401 aa).

The AB hydrolase-1 domain maps to 37-358 (NAVLVCHALT…HGHDAFLVEP (322 aa)). Serine 146 acts as the Nucleophile in catalysis. Arginine 215 serves as a coordination point for substrate. Active-site residues include aspartate 318 and histidine 351. Aspartate 352 serves as a coordination point for substrate.

This sequence belongs to the AB hydrolase superfamily. MetX family. Homodimer.

The protein resides in the cytoplasm. The enzyme catalyses L-homoserine + acetyl-CoA = O-acetyl-L-homoserine + CoA. It participates in amino-acid biosynthesis; L-methionine biosynthesis via de novo pathway; O-acetyl-L-homoserine from L-homoserine: step 1/1. In terms of biological role, transfers an acetyl group from acetyl-CoA to L-homoserine, forming acetyl-L-homoserine. In Natronomonas pharaonis (strain ATCC 35678 / DSM 2160 / CIP 103997 / JCM 8858 / NBRC 14720 / NCIMB 2260 / Gabara) (Halobacterium pharaonis), this protein is Homoserine O-acetyltransferase.